Consider the following 1471-residue polypeptide: Myosin-4 (1471 aa).

The Myosin N-terminal SH3-like domain maps to 4–57; that stretch reads EVGTKCWYPHKEQGWIGGEVTKNDFFEGTFHLELKLEDGETVSIETNSFENDDD. The 707-residue stretch at 71–777 folds into the Myosin motor domain; it reads ESTDDLTTLS…MLAFLEKLRT (707 aa). Residue 165–172 coordinates ATP; that stretch reads GESGAGKT. Residues 647 to 669 are actin-binding; it reads LGELMAIINSTNVHYIRCIKPNS. IQ domains lie at 781-801, 804-824, 829-849, 876-898, and 899-928; these read NEIC…LQYL, MESI…TRVD, TRAA…EYYR, MLMA…DYRT, and LKRS…EVEE. Residues 938 to 1063 adopt a coiled-coil conformation; it reads GLLEEAIEFK…LAFIENVIAQ (126 aa). Residues 1164 to 1419 form the Dilute domain; it reads SKVLLTVESI…LNYLANVIKR (256 aa).

It belongs to the TRAFAC class myosin-kinesin ATPase superfamily. Myosin family. As to quaternary structure, interacts with SHE2 and SHE3.

Its subcellular location is the bud. Part of the mRNA localization machinery that restricts accumulation of certain proteins to the bud and in the daughter cell. Recruited to specific mRNAs including the ASH1 mRNA, coding for a repressor of the HO endonuclease, via its interaction with SHE3. The protein is Myosin-4 (MYO4) of Saccharomyces cerevisiae (strain ATCC 204508 / S288c) (Baker's yeast).